The chain runs to 191 residues: dTTP/UTP pyrophosphatase (191 aa).

The active-site Proton acceptor is the Asp70.

It belongs to the Maf family. YhdE subfamily. A divalent metal cation is required as a cofactor.

It localises to the cytoplasm. It carries out the reaction dTTP + H2O = dTMP + diphosphate + H(+). The catalysed reaction is UTP + H2O = UMP + diphosphate + H(+). Its function is as follows. Nucleoside triphosphate pyrophosphatase that hydrolyzes dTTP and UTP. May have a dual role in cell division arrest and in preventing the incorporation of modified nucleotides into cellular nucleic acids. This Clostridium novyi (strain NT) protein is dTTP/UTP pyrophosphatase.